A 217-amino-acid polypeptide reads, in one-letter code: Monomethylamine corrinoid protein 2 (217 aa).

The region spanning 1–91 (MTNTEIFDKL…ELEKNKKEGD (91 aa)) is the B12-binding N-terminal domain. A B12-binding domain is found at 93–217 (AGLAITFVAE…AAKVALEVMK (125 aa)). His-106 contributes to the methylcob(III)alamin binding site.

This sequence belongs to the methylamine corrinoid protein family. As to quaternary structure, can form a complex with MtmB.

The protein operates within one-carbon metabolism; methanogenesis from methylamine. Its function is as follows. Acts as a methyl group carrier between MtmB and MtbA. In Methanosarcina barkeri, this protein is Monomethylamine corrinoid protein 2 (mtmC2).